An 854-amino-acid polypeptide reads, in one-letter code: MVFVECGAALKLNQCIYIGIASTICLLITQKANAQEKPVNTKNIGLITNIPRLSDIERPPTSVKDWLSQSAPTPPKIKITGVRINRTDDNFEIILETPDGEISAPETLQEGNIFIADIPNAVLALPEGKEFREDTPVDGISYVTVTQQESNNTVRVTIASSGKLPPIQVVNQSNGLTIALTPTSPDIELIVTAQKRPEDAQDVPLSLTVIPQQEIEDAQIRSFQDIANNTPNFSFLPTTAGSADFSYYSVRGLNNFNFLANQDTVGFYIDDVPFDYGGFLDVGLIDLERVEVLRGPQSTLYGRSSPAGVVNVISRPPSNQPEMRISALYGSYNNRELQLSLSDAIIPDKLAFRLAGAYNARDGVFDNTFLNKPIGERSQLTGRAQILWTPTPEWNISFNAYASDNDNGNPTFSRQNAENPFQVSQEVDGFHRLSTNTQALKISYNGDGFRATSITTRRFSNQNTLVGDNFPGDLLQQIIGINSTLWSQEFRLQSPESADRLRWLLGGYYESRNFNVLDDTFKYSDAGAVFFGLPASGSDRVSAEQNRHTYAIFGQIDYKPIAPLTLFAGWRYETADAELDRRRVFVNPDGTANPPTAEVRNATLNSDAFIPRFGLQYRFNPNLMAYATIAKGYRPSGFNYRADTEDTRRFQEETTWTYEAGLKSSWLDDRLSANLSIFQSDVDNYQVLLTDDFGFFRNVTNANVKVTGLEFELKANPLQGLDLIAGIGYVDSKFKNYRNSFTNRDFSNNRVPFAPELTYNLAVQYRSPGGIFARAELRGYGITYFDDANQVKQDPYALVNARIGYEGEKYGIYLYANNLFDTRYITSGFLFPPPNVTAGFGDPVTYGVRVSASF.

Positions 187-194 match the TonB box motif; the sequence is IELIVTAQ. The TBDR plug domain occupies 199–315; the sequence is DAQDVPLSLT…PAGVVNVISR (117 aa). The 535-residue stretch at 320–854 folds into the TBDR beta-barrel domain; that stretch reads QPEMRISALY…TYGVRVSASF (535 aa). The TonB C-terminal box signature appears at 839–854; it reads GFGDPVTYGVRVSASF.

The protein belongs to the TonB-dependent receptor family.

The protein resides in the cell outer membrane. Involved in the TonB-dependent uptake of copper and iron under conditions in which the concentration of copper exceeds that of the iron. In Nostoc sp. (strain PCC 7120 / SAG 25.82 / UTEX 2576), this protein is Iron and copper transporter IacT.